The sequence spans 431 residues: MGKNVVVLGTQWGDEGKGKIVDLLTQDAQVVVRYQGGHNAGHTLKINGVKTVLRLIPSGMLRPNVTCYVANGVVLSPQALLSEIKELEGNGINVRERLRISLACPLILPYHIALDKARETHMGKSAIGTTGRGIGPAYEDKVARRALRVGDLFHRDRFANKLTELLDYHNFVLTQYFKQPAVDLESLLDESLQWAEELRPMVCDVSACLHEHRKQGENILFEGAQGVYLDIDHGTYPYVTSSNTCVGSVINGAGFGPRYIDYVLGITKAYTTRVGGGPFPTELLDDVGKRIAERGQEFGAVTGRPRRCGWFDAVLLKRSIELNSISGLCVTKLDVLDGLEVLRIAVAYKDRDGNILSRPPLAADDFNDLLPVYEELPGWQESTADVTVMSDLPANARAYLKRIEEILGIPIDMLSTGPERDSTITLRDPFL.

GTP contacts are provided by residues 13–19 (GDEGKGK) and 41–43 (GHT). D14 functions as the Proton acceptor in the catalytic mechanism. Residues D14 and G41 each coordinate Mg(2+). IMP contacts are provided by residues 14–17 (DEGK), 39–42 (NAGH), T130, R144, Q225, T240, and R304. Catalysis depends on H42, which acts as the Proton donor. 300–306 (AVTGRPR) is a substrate binding site. Residues R306, 332–334 (KLD), and 415–417 (STG) contribute to the GTP site.

This sequence belongs to the adenylosuccinate synthetase family. In terms of assembly, homodimer. The cofactor is Mg(2+).

The protein resides in the cytoplasm. It catalyses the reaction IMP + L-aspartate + GTP = N(6)-(1,2-dicarboxyethyl)-AMP + GDP + phosphate + 2 H(+). It functions in the pathway purine metabolism; AMP biosynthesis via de novo pathway; AMP from IMP: step 1/2. Its function is as follows. Plays an important role in the de novo pathway of purine nucleotide biosynthesis. Catalyzes the first committed step in the biosynthesis of AMP from IMP. This chain is Adenylosuccinate synthetase, found in Legionella pneumophila (strain Lens).